We begin with the raw amino-acid sequence, 110 residues long: WPPLHPLYRTDLSLEAAIEEEANRLDPLVQQANLLIDTAALSTHELAERLREFLSGHSDKELKIVVESFGFKYGIPLDADYVFDVRFLPNPHWNQGLRPLTGLDDEVANS.

Belongs to the RapZ-like family.

In terms of biological role, displays ATPase and GTPase activities. The polypeptide is Nucleotide-binding protein HI1146 homolog (Aggregatibacter actinomycetemcomitans (Actinobacillus actinomycetemcomitans)).